Consider the following 89-residue polypeptide: Small ribosomal subunit protein uS15 (89 aa).

Residues 1-10 (MAVTTDQKSQ) are compositionally biased toward polar residues. A disordered region spans residues 1-22 (MAVTTDQKSQVMRDYQRAAGDT).

This sequence belongs to the universal ribosomal protein uS15 family. As to quaternary structure, part of the 30S ribosomal subunit. Forms a bridge to the 50S subunit in the 70S ribosome, contacting the 23S rRNA.

Its function is as follows. One of the primary rRNA binding proteins, it binds directly to 16S rRNA where it helps nucleate assembly of the platform of the 30S subunit by binding and bridging several RNA helices of the 16S rRNA. Functionally, forms an intersubunit bridge (bridge B4) with the 23S rRNA of the 50S subunit in the ribosome. The sequence is that of Small ribosomal subunit protein uS15 from Nitrosomonas europaea (strain ATCC 19718 / CIP 103999 / KCTC 2705 / NBRC 14298).